Consider the following 270-residue polypeptide: Glucosamine-6-phosphate deaminase (270 aa).

Residue D68 is the Proton acceptor; for enolization step of the active site. Catalysis depends on D145, which acts as the For ring-opening step. Catalysis depends on H147, which acts as the Proton acceptor; for ring-opening step. The active-site For ring-opening step is the E152.

The protein belongs to the glucosamine/galactosamine-6-phosphate isomerase family. NagB subfamily.

It catalyses the reaction alpha-D-glucosamine 6-phosphate + H2O = beta-D-fructose 6-phosphate + NH4(+). It functions in the pathway amino-sugar metabolism; N-acetylneuraminate degradation; D-fructose 6-phosphate from N-acetylneuraminate: step 5/5. In terms of biological role, catalyzes the reversible isomerization-deamination of glucosamine 6-phosphate (GlcN6P) to form fructose 6-phosphate (Fru6P) and ammonium ion. The polypeptide is Glucosamine-6-phosphate deaminase (Bifidobacterium longum (strain NCC 2705)).